The sequence spans 484 residues: Putative beta-barrel assembly-enhancing protease (484 aa).

The first 23 residues, 1 to 23, serve as a signal peptide directing secretion; the sequence is MKFFPTRTLLCLCIAAPCLPAIA. A Zn(2+)-binding site is contributed by His-133. Residue Glu-134 is part of the active site. Zn(2+) contacts are provided by His-137 and Glu-198. The active-site Proton donor is the Asp-202. TPR repeat units lie at residues 307–340, 341–374, 376–408, and 426–459; these read PSIQYGKALVYLDLKQFDKAEPLLTQLVKEQPDN, HFYLDAISDLYIELKQADKAQSLLEKALKQTPNN, VLTINYANVLLKQDKFTDAIRILQRYTHDNPND, and AEDLAARGEIMALQANWNKAIQFYTQASQLVELG.

Belongs to the peptidase M48 family. BepA subfamily. Zn(2+) serves as cofactor.

Its subcellular location is the periplasm. Its function is as follows. Functions both as a chaperone and a metalloprotease. Maintains the integrity of the outer membrane by promoting either the assembly or the elimination of outer membrane proteins, depending on their folding state. The protein is Putative beta-barrel assembly-enhancing protease of Vibrio cholerae serotype O1 (strain ATCC 39315 / El Tor Inaba N16961).